A 618-amino-acid chain; its full sequence is GMC oxidoreductase family protein Mala s 12 (618 aa).

A signal peptide spans 1–23; it reads MKGIVSWAVVSAALVLSATESLA. FAD is bound by residues Val-129 and Val-280. Catalysis depends on His-556, which acts as the Proton donor. Catalysis depends on His-599, which acts as the Proton acceptor.

It belongs to the GMC oxidoreductase family. As to quaternary structure, monomer. The cofactor is FAD.

The protein resides in the secreted. The chain is GMC oxidoreductase family protein Mala s 12 from Malassezia sympodialis (strain ATCC 42132) (Atopic eczema-associated yeast).